Here is a 280-residue protein sequence, read N- to C-terminus: Putative pyruvate, phosphate dikinase regulatory protein (280 aa).

153–160 (GISRTSKT) provides a ligand contact to ADP.

Belongs to the pyruvate, phosphate/water dikinase regulatory protein family. PDRP subfamily.

The enzyme catalyses N(tele)-phospho-L-histidyl/L-threonyl-[pyruvate, phosphate dikinase] + ADP = N(tele)-phospho-L-histidyl/O-phospho-L-threonyl-[pyruvate, phosphate dikinase] + AMP + H(+). The catalysed reaction is N(tele)-phospho-L-histidyl/O-phospho-L-threonyl-[pyruvate, phosphate dikinase] + phosphate + H(+) = N(tele)-phospho-L-histidyl/L-threonyl-[pyruvate, phosphate dikinase] + diphosphate. Functionally, bifunctional serine/threonine kinase and phosphorylase involved in the regulation of the pyruvate, phosphate dikinase (PPDK) by catalyzing its phosphorylation/dephosphorylation. The protein is Putative pyruvate, phosphate dikinase regulatory protein of Bartonella quintana (strain Toulouse) (Rochalimaea quintana).